Reading from the N-terminus, the 260-residue chain is Ribosomal RNA small subunit methyltransferase A (260 aa).

S-adenosyl-L-methionine is bound by residues leucine 23, glycine 48, glutamate 69, aspartate 94, and asparagine 110.

This sequence belongs to the class I-like SAM-binding methyltransferase superfamily. rRNA adenine N(6)-methyltransferase family. RsmA subfamily.

It is found in the cytoplasm. It catalyses the reaction adenosine(1518)/adenosine(1519) in 16S rRNA + 4 S-adenosyl-L-methionine = N(6)-dimethyladenosine(1518)/N(6)-dimethyladenosine(1519) in 16S rRNA + 4 S-adenosyl-L-homocysteine + 4 H(+). Specifically dimethylates two adjacent adenosines (A1518 and A1519) in the loop of a conserved hairpin near the 3'-end of 16S rRNA in the 30S particle. May play a critical role in biogenesis of 30S subunits. This Thermotoga petrophila (strain ATCC BAA-488 / DSM 13995 / JCM 10881 / RKU-1) protein is Ribosomal RNA small subunit methyltransferase A.